A 95-amino-acid polypeptide reads, in one-letter code: Co-chaperonin GroES (95 aa).

Belongs to the GroES chaperonin family. In terms of assembly, heptamer of 7 subunits arranged in a ring. Interacts with the chaperonin GroEL.

The protein localises to the cytoplasm. Together with the chaperonin GroEL, plays an essential role in assisting protein folding. The GroEL-GroES system forms a nano-cage that allows encapsulation of the non-native substrate proteins and provides a physical environment optimized to promote and accelerate protein folding. GroES binds to the apical surface of the GroEL ring, thereby capping the opening of the GroEL channel. This chain is Co-chaperonin GroES, found in Xanthomonas axonopodis pv. citri (strain 306).